The following is an 89-amino-acid chain: MANIKSAKKDSIISEERRKKNASQRSKMRTFIKKVRLAISSGDKEKSYDAFKKMQPIIDKYATKGLIHKNKAARYKSILSFKIAKLHKN.

The tract at residues Met1–Lys27 is disordered. Positions Ala7–Arg18 are enriched in basic and acidic residues.

The protein belongs to the bacterial ribosomal protein bS20 family.

Functionally, binds directly to 16S ribosomal RNA. In Buchnera aphidicola subsp. Schizaphis graminum (strain Sg), this protein is Small ribosomal subunit protein bS20.